Here is a 372-residue protein sequence, read N- to C-terminus: 18-hydroxynorfluorocurarine reductase (372 aa).

The Zn(2+) site is built by Cys47, Asp50, His69, Glu70, Cys100, Cys103, Cys106, Cys114, and Cys172. Residues 197-202 (GLGGIG), Lys226, 283-285 (LGA), Ser307, and Arg354 each bind NADP(+).

Belongs to the zinc-containing alcohol dehydrogenase family. Homodimer. Zn(2+) serves as cofactor.

The enzyme catalyses (19E)-cur-19-en-17-al + NADP(+) = norfluorocurarine + NADPH + H(+). It carries out the reaction 17,18-epoxy-17-hydroxycur-19-ene + NADP(+) = 18-hydroxynorfluorocurarine + NADPH + H(+). It participates in alkaloid biosynthesis. Functionally, alcohol dehydrogenase involved in the biosynthesis of curare monoterpene indole alkaloids (MIAs), natural products such as diaboline, a pharmacologically active compound used to regulate blood pressure. Curare alkaloids act as animal glycine receptor antagonists. Catalyzes the conversion of norfluorocurarine to desoxy Wieland-Gumlich aldehyde, and of 18-OH norfluorocurarine to Wieland-Gumlich aldehyde. This Strychnos sp protein is 18-hydroxynorfluorocurarine reductase.